Consider the following 104-residue polypeptide: Protein S100-A14 (104 aa).

The region spanning 27–61 is the EF-hand domain; sequence KNFHQYSVEGGKETLTPSELRDLVTQQLPHLMPSN.

The protein belongs to the S-100 family. As to quaternary structure, homodimer. Interacts with AGER.

The protein resides in the cytoplasm. Functionally, modulates P53/TP53 protein levels, and thereby plays a role in the regulation of cell survival and apoptosis. Depending on the context, it can promote cell proliferation or apoptosis. Plays a role in the regulation of cell migration by modulating the levels of MMP2, a matrix protease that is under transcriptional control of P53/TP53. Does not bind calcium. This chain is Protein S100-A14 (S100A14), found in Bos taurus (Bovine).